Reading from the N-terminus, the 137-residue chain is Golgin subfamily A member 7 (137 aa).

S-palmitoyl cysteine attachment occurs at residues Cys69 and Cys72.

It belongs to the ERF4 family. Interacts with GOLGA3. Interacts with ZDHHC9. Palmitoylated on Cys-69 and Cys-72; which is required for Golgi localization and interaction with GOLGA3.

The protein resides in the golgi apparatus membrane. In terms of biological role, may be involved in protein transport from Golgi to cell surface. The ZDHHC9-GOLGA7 complex is a palmitoyltransferase specific for HRAS and NRAS. The polypeptide is Golgin subfamily A member 7 (GOLGA7) (Bos taurus (Bovine)).